A 451-amino-acid polypeptide reads, in one-letter code: MEPEIISRESIKPSSATPLHLKTHKLCLLDQYRHHAYFPIVLYYPFNQEPNISDPTQINHIVSERLQLLKQSLPETLSRFYPFAGKIKDNLSVDCNDEGIYFVEARVKSSLSDYFNQPNFANANYKFIPFDVKELSGSISGLHVAKIQVTTFAYGGLVICACLSHLFGDGITLNSFLKSWVATACKNAEEAERPNNDASSLFPQQEIYPKEATWTEMCKPFYRDGRFVSRRFLFDAKAIANLKDKVASSLVQNPSRVEAVSALLSRCIMTAFKGKFGSHRPILLTHTVNMRRKAKPLMPEYSMGNIVWTANALCTNEEPELDGLVGKLREAIMEINGDFLKSLQGDEGFLNLCEAAKNESALCSSAVERITFSSWCNFGLVDIDFGWGKPIWVSTIGIDGPVPCFSNTIILMDTRLKGEIEAWVYLLEEDMNILELDKELIAFAKMDPSPM.

Catalysis depends on proton acceptor residues His165 and Asp384.

This sequence belongs to the plant acyltransferase family. In terms of assembly, monomer. In terms of tissue distribution, mainly expressed in petioles and, to a lower extent, in roots.

It catalyses the reaction epi-neemfruitin B + acetyl-CoA = 7-acetyl-epi-neemfruitin B + CoA. Its pathway is secondary metabolite biosynthesis; terpenoid biosynthesis. Functionally, acetyltransferase involved in the biosynthesis of limonoids triterpene natural products such as azadirachtin, an antifeedant widely used as bioinsecticide, and possessing many medicinal applications including anti-tumoral, anti-malarial, anti-rheumatic, antibacterial, anti-inflammatory, anti-pyretic and diuretic effects. Catalyzes the formation of 7-acetyl-epi-neemfruitin B from epi-neemfruitin B. The chain is Epi-neemfruitin B 7-O-acetyltransferse L7AT from Melia azedarach (Chinaberry tree).